The following is a 485-amino-acid chain: Phosphoglucosamine mutase (485 aa).

Residue Ser-133 is the Phosphoserine intermediate of the active site. The Mg(2+) site is built by Ser-133, Asp-274, Asp-276, and Asp-278. At Ser-133 the chain carries Phosphoserine.

It belongs to the phosphohexose mutase family. The cofactor is Mg(2+). In terms of processing, activated by phosphorylation.

The enzyme catalyses alpha-D-glucosamine 1-phosphate = D-glucosamine 6-phosphate. Its function is as follows. Catalyzes the conversion of glucosamine-6-phosphate to glucosamine-1-phosphate. This Rippkaea orientalis (strain PCC 8801 / RF-1) (Cyanothece sp. (strain PCC 8801)) protein is Phosphoglucosamine mutase.